A 316-amino-acid chain; its full sequence is Ribosomal RNA large subunit methyltransferase F (316 aa).

The protein belongs to the methyltransferase superfamily. METTL16/RlmF family.

The protein resides in the cytoplasm. It carries out the reaction adenosine(1618) in 23S rRNA + S-adenosyl-L-methionine = N(6)-methyladenosine(1618) in 23S rRNA + S-adenosyl-L-homocysteine + H(+). Specifically methylates the adenine in position 1618 of 23S rRNA. The protein is Ribosomal RNA large subunit methyltransferase F of Pseudomonas putida (strain GB-1).